The chain runs to 544 residues: MKISMINYKSLLALLFILASWIIFTVFQNSTKVWSALNLSISLHYWNNSTKSLFPKTPLISLKPLTETELRIKEIIEKLDQQIPPRPFTHVNTTTSATHSTATILNPRDTYCRGDQLHILLEVRDHLGRRKQYGGDFLRARMSSPALMAGASGKVTDFNNGTYLVSFTLFWEGQVSLSLLLIHPSEGVSALWSARNQGYDRVIFTGQFVNGTSQVHSECGLILNTNAELCQYLDNRDQEGFYCVRPQHMPCAALTHMYSKNKKVSYLSKQEKSLFERSNVGVEIMEKFNTISVSKCNKETVAMKEKCKFGMTSTIPSGHVWRNTWNPVSCSLATVKMKECLRGKLIYLMGDSTIRQWMEYFKASINTLKSVDLHESGKLQHQLAVDLDRNINIQWQKYCYPLIGSMTYSVKEMEYLTRAIDRTGGEKNTVIVISLGQHFRPFPIDVFIRRALNVHKAIQHLLLRSPDTMVIIKTENIREMYNDAERFSDFHGYIQYLIIKDIFQDLSVSIIDAWDITIAYGTNNVHPPQHVVGNQINILLNYIC.

The first 27 residues, 1–27 (MKISMINYKSLLALLFILASWIIFTVF), serve as a signal peptide directing secretion. N-linked (GlcNAc...) asparagine glycans are attached at residues Asn-29, Asn-38, Asn-47, Asn-48, Asn-92, Asn-160, and Asn-210.

Belongs to the NXPE family.

It localises to the secreted. The chain is NXPE family member 4 (NXPE4) from Homo sapiens (Human).